The primary structure comprises 1065 residues: Bifunctional cytochrome P450/NADPH--P450 reductase (1065 aa).

Positions 1–479 (MEKKVSAIPQ…EDKLKNDEIK (479 aa)) are cytochrome P450. Cys405 contacts heme. Residues 480 to 1065 (QHVQKTPSII…RYGKDVWAGI (586 aa)) are NADPH--P450 reductase. Residues 496 to 635 (LLVLYGSDTG…QLEQWKQNMW (140 aa)) form the Flavodoxin-like domain. FMN contacts are provided by residues 502–507 (SDTGVA), 549–552 (SYNG), 583–585 (CGD), and 591–593 (TYQ). The FAD-binding FR-type domain occupies 674–907 (YEAVYASILE…RTPQSNFELP (234 aa)).

It in the N-terminal section; belongs to the cytochrome P450 family. It depends on heme as a cofactor. The cofactor is FAD. FMN serves as cofactor.

It carries out the reaction 2 oxidized [cytochrome P450] + NADPH = 2 reduced [cytochrome P450] + NADP(+) + H(+). It catalyses the reaction an organic molecule + reduced [NADPH--hemoprotein reductase] + O2 = an alcohol + oxidized [NADPH--hemoprotein reductase] + H2O + H(+). Its function is as follows. Functions as a fatty acid monooxygenase. Catalyzes hydroxylation of fatty acids at omega-1, omega-2 and omega-3 positions, yielding primarily omega-1 and omega-2 hydroxylated products. Metabolizes unsaturated and saturated fatty acids as well as N-acylamino acids. Has a preference for long-chain unsaturated fatty acids over saturated fatty acids. Shows activity toward saturated fatty acids with a chain length of 9-18 carbons with preference for longer fatty acids. Also displays a NADPH-dependent reductase activity in the C-terminal domain, which allows electron transfer from NADPH to the heme iron of the cytochrome P450 N-terminal domain. The protein is Bifunctional cytochrome P450/NADPH--P450 reductase of Bacillus cereus (strain ATCC 14579 / DSM 31 / CCUG 7414 / JCM 2152 / NBRC 15305 / NCIMB 9373 / NCTC 2599 / NRRL B-3711).